The chain runs to 540 residues: Ribonuclease Y (540 aa).

The chain crosses the membrane as a helical span at residues 4 to 24 (TILVPVAVAIVSVLVGGCAGY). The KH domain maps to 230-293 (TVSVVNLPSD…EIAKRALERL (64 aa)). Residues 356–449 (VLSHSIEVGK…VVAADTISSA (94 aa)) enclose the HD domain.

Belongs to the RNase Y family.

It localises to the cell membrane. Its function is as follows. Endoribonuclease that initiates mRNA decay. The polypeptide is Ribonuclease Y (Lactobacillus johnsonii (strain CNCM I-12250 / La1 / NCC 533)).